Here is a 101-residue protein sequence, read N- to C-terminus: Small ribosomal subunit protein uS14 (101 aa).

The protein belongs to the universal ribosomal protein uS14 family. As to quaternary structure, part of the 30S ribosomal subunit. Contacts proteins S3 and S10.

Functionally, binds 16S rRNA, required for the assembly of 30S particles and may also be responsible for determining the conformation of the 16S rRNA at the A site. In Pelagibacter ubique (strain HTCC1062), this protein is Small ribosomal subunit protein uS14.